The primary structure comprises 82 residues: RNA-binding protein GWCH70_0105 (82 aa).

Belongs to the eukaryotic ribosomal protein eL8 family.

The polypeptide is RNA-binding protein GWCH70_0105 (Geobacillus sp. (strain WCH70)).